A 434-amino-acid polypeptide reads, in one-letter code: Enolase (434 aa).

Gln163 is a (2R)-2-phosphoglycerate binding site. Catalysis depends on Glu205, which acts as the Proton donor. Residues Asp242, Glu291, and Asp318 each coordinate Mg(2+). (2R)-2-phosphoglycerate contacts are provided by Lys343, Arg372, Ser373, and Lys394. The Proton acceptor role is filled by Lys343.

This sequence belongs to the enolase family. It depends on Mg(2+) as a cofactor.

The protein localises to the cytoplasm. The protein resides in the secreted. It is found in the cell surface. The catalysed reaction is (2R)-2-phosphoglycerate = phosphoenolpyruvate + H2O. Its pathway is carbohydrate degradation; glycolysis; pyruvate from D-glyceraldehyde 3-phosphate: step 4/5. In terms of biological role, catalyzes the reversible conversion of 2-phosphoglycerate (2-PG) into phosphoenolpyruvate (PEP). It is essential for the degradation of carbohydrates via glycolysis. In Streptococcus intermedius, this protein is Enolase.